A 170-amino-acid polypeptide reads, in one-letter code: Shikimate kinase (170 aa).

11–16 contributes to the ATP binding site; the sequence is LSGKST. Residue Ser-15 participates in Mg(2+) binding. Residues Asp-33, Arg-57, and Gly-79 each coordinate substrate. Arg-119 lines the ATP pocket. Arg-137 is a substrate binding site.

The protein belongs to the shikimate kinase family. As to quaternary structure, monomer. Requires Mg(2+) as cofactor.

It localises to the cytoplasm. The catalysed reaction is shikimate + ATP = 3-phosphoshikimate + ADP + H(+). It participates in metabolic intermediate biosynthesis; chorismate biosynthesis; chorismate from D-erythrose 4-phosphate and phosphoenolpyruvate: step 5/7. Functionally, catalyzes the specific phosphorylation of the 3-hydroxyl group of shikimic acid using ATP as a cosubstrate. In Clostridium botulinum (strain Kyoto / Type A2), this protein is Shikimate kinase.